The chain runs to 90 residues: MASSRLPASALTLKQFIQRQKVLSLYRNMMRTIRQVPDEGDRKYLRDWARDEFKRNKNSTNQDAIRMMITQANMHHDELQSSLALANVKK.

The transit peptide at Met1–Arg19 directs the protein to the mitochondrion.

The protein belongs to the complex I LYR family.

The protein resides in the mitochondrion. Involved in efficient integration of the N-module into mitochondrial respiratory chain complex I. The protein is LYR motif-containing protein 2 (lyrm2) of Salmo salar (Atlantic salmon).